Here is a 362-residue protein sequence, read N- to C-terminus: H-2 class I histocompatibility antigen, D-K alpha chain (362 aa).

Residues 1–24 form the signal peptide; it reads MGAMVPRTLLLLLAAALAPAQTRA. The tract at residues 25–114 is alpha-1; it reads GPHSLRYFET…LLRYYNQSEG (90 aa). The Extracellular segment spans residues 25–306; that stretch reads GPHSLRYFET…RWEPPPSTDS (282 aa). Asn-110 is a glycosylation site (N-linked (GlcNAc...) asparagine). An alpha-2 region spans residues 115–206; it reads GSHTIQRLSG…ELGNATLLHT (92 aa). A disulfide bond links Cys-125 and Cys-188. Residues Asn-200 and Asn-280 are each glycosylated (N-linked (GlcNAc...) asparagine). Residues 207–298 are alpha-3; it reads DSPKAHVTHH…GLPEPLTLRW (92 aa). The region spanning 209–297 is the Ig-like C1-type domain; sequence PKAHVTHHPR…EGLPEPLTLR (89 aa). Cys-227 and Cys-283 are joined by a disulfide. The connecting peptide stretch occupies residues 299 to 306; the sequence is EPPPSTDS. Residues 307–333 form a helical membrane-spanning segment; it reads YMVIVAVLGVLGAVAIIGAVVAFVMMM. Topologically, residues 334–362 are cytoplasmic; the sequence is RRNTGGKGGDYTLTPGSQSSEMSLPDCKA. The tract at residues 340 to 362 is disordered; sequence KGGDYTLTPGSQSSEMSLPDCKA. 2 positions are modified to phosphoserine: Ser-353 and Ser-356.

Belongs to the MHC class I family. As to quaternary structure, heterodimer of an alpha chain and a beta chain (beta-2-microglobulin). Polyubiquitinated in case of infection by murid herpesvirus 4, by the viral E3 ligase K3 (mK3), leading to target the protein for rapid degradation by the endoplasmic reticulum-associated degradation (ERAD) system. Ubiquitination takes place on lysine, as well as serine and threonine residues present in the cytoplasmic tail. Hydroxylated serine and threonine residues in the cytoplasmic tail are subject to ubiquitination via ester bonds instead of the classical isopeptide linkage. Post-translationally, hydroxylation of residues in the cytoplasmic tail.

It is found in the membrane. Involved in the presentation of foreign antigens to the immune system. The protein is H-2 class I histocompatibility antigen, D-K alpha chain (H2-D1) of Mus musculus (Mouse).